The chain runs to 342 residues: MTVKPLRDVTPKPLEGEERLEQSLRPATFDDYVGQVKIVDNVKVYAAAARQRGESLDHVLLSGPPGLGKTSLAHILARELGVTLHVTSGPALVKKGDLAGLLTALAPRDILFIDEIHRLSPAVEEALYPAMEDYRFDVVLGAGLGAQTMEMKLERFTLVGATTRTGLLASPLRDRFPIQERLEYYGPAELKEIAVRAARKLGLPVDEDGAEELARRARGTPRIAIRLLQRARDFAQVEGDGRLTREVVDRTLRRLEVDARGLDAMDRRILAAVIDTFGGGPVGIDAVAAAVGEESGTLEDVYEPFLVREGYLARTPRGRVALPAAYAHLGRDRPGGKQGSLV.

The interval 1–185 (MTVKPLRDVT…FPIQERLEYY (185 aa)) is large ATPase domain (RuvB-L). ATP is bound by residues leucine 24, arginine 25, glycine 66, lysine 69, threonine 70, serine 71, 132-134 (EDY), arginine 175, tyrosine 185, and arginine 222. Threonine 70 contacts Mg(2+). Residues 186 to 256 (GPAELKEIAV…VVDRTLRRLE (71 aa)) form a small ATPAse domain (RuvB-S) region. The interval 259–342 (ARGLDAMDRR…RPGGKQGSLV (84 aa)) is head domain (RuvB-H). DNA is bound by residues arginine 314 and arginine 319.

It belongs to the RuvB family. As to quaternary structure, homohexamer. Forms an RuvA(8)-RuvB(12)-Holliday junction (HJ) complex. HJ DNA is sandwiched between 2 RuvA tetramers; dsDNA enters through RuvA and exits via RuvB. An RuvB hexamer assembles on each DNA strand where it exits the tetramer. Each RuvB hexamer is contacted by two RuvA subunits (via domain III) on 2 adjacent RuvB subunits; this complex drives branch migration. In the full resolvosome a probable DNA-RuvA(4)-RuvB(12)-RuvC(2) complex forms which resolves the HJ.

It localises to the cytoplasm. The catalysed reaction is ATP + H2O = ADP + phosphate + H(+). Functionally, the RuvA-RuvB-RuvC complex processes Holliday junction (HJ) DNA during genetic recombination and DNA repair, while the RuvA-RuvB complex plays an important role in the rescue of blocked DNA replication forks via replication fork reversal (RFR). RuvA specifically binds to HJ cruciform DNA, conferring on it an open structure. The RuvB hexamer acts as an ATP-dependent pump, pulling dsDNA into and through the RuvAB complex. RuvB forms 2 homohexamers on either side of HJ DNA bound by 1 or 2 RuvA tetramers; 4 subunits per hexamer contact DNA at a time. Coordinated motions by a converter formed by DNA-disengaged RuvB subunits stimulates ATP hydrolysis and nucleotide exchange. Immobilization of the converter enables RuvB to convert the ATP-contained energy into a lever motion, pulling 2 nucleotides of DNA out of the RuvA tetramer per ATP hydrolyzed, thus driving DNA branch migration. The RuvB motors rotate together with the DNA substrate, which together with the progressing nucleotide cycle form the mechanistic basis for DNA recombination by continuous HJ branch migration. Branch migration allows RuvC to scan DNA until it finds its consensus sequence, where it cleaves and resolves cruciform DNA. The polypeptide is Holliday junction branch migration complex subunit RuvB (Anaeromyxobacter sp. (strain K)).